A 2799-amino-acid polypeptide reads, in one-letter code: E3 ubiquitin-protein ligase UBR5 (2799 aa).

Position 2 is an N-acetylthreonine (Thr-2). Over residues 77-88 the composition is skewed to basic and acidic residues; it reads DRLELGKPDNND. The tract at residues 77-175 is disordered; it reads DRLELGKPDN…DRGSGLLGSQ (99 aa). Residues 89 to 110 are compositionally biased toward polar residues; the sequence is GSKLNSNSGAGRTSRPGRTSDS. Ser-110 is modified (phosphoserine). A compositionally biased stretch (gly residues) spans 135 to 144; that stretch reads GVGGSGGGSS. The region spanning 184–226 is the UBA domain; sequence VIPEELISQAQVVLQGKSRSVIIRELQRTNLDVNLAVNNLLSR. The residue at position 327 (Ser-327) is a Phosphoserine. Residues 328–347 are compositionally biased toward basic and acidic residues; that stretch reads FDNERGSTSKEGEPNLDKKN. Residues 328–352 form a disordered region; it reads FDNERGSTSKEGEPNLDKKNTPVQS. A phosphoserine mark is found at Ser-352 and Ser-578. Positions 579 to 648 are disordered; that stretch reads PESLKNMEKA…APKEEEKVNE (70 aa). The segment covering 583-604 has biased composition (basic and acidic residues); that stretch reads KNMEKASKTTEAKPESKQEPVK. Phosphoserine is present on Ser-612. Low complexity predominate over residues 614–628; the sequence is ASTCSDASSIASSAS. Thr-637 carries the phosphothreonine modification. Ser-808, Ser-928, and Ser-1018 each carry phosphoserine. Disordered regions lie at residues 999-1031 and 1052-1075; these read AGLG…PDPP and TAAT…EPSV. A compositionally biased stretch (pro residues) spans 1017–1031; the sequence is VSPPIAPPSWVPDPP. A compositionally biased stretch (polar residues) spans 1052–1073; it reads TAATGTGQGPSTSTIPGPSTEP. Phosphothreonine is present on residues Thr-1115 and Thr-1135. A UBR-type zinc finger spans residues 1177–1245; it reads DTCSFTWTGA…EKCKCKTLIA (69 aa). Zn(2+)-binding residues include Cys-1179, Cys-1196, Cys-1199, Cys-1208, Cys-1211, Cys-1215, His-1216, and His-1219. Ser-1227 carries the post-translational modification Phosphoserine. Residues Cys-1232, Cys-1234, and Cys-1240 each coordinate Zn(2+). The tract at residues 1299 to 1318 is disordered; that stretch reads REDRNRKTASPEDSDMPDHD. Phosphoserine is present on residues Ser-1308, Ser-1355, Ser-1375, and Ser-1481. Residues 1515–1740 form a disordered region; that stretch reads SVEPLPPRPS…PSSTSTPAAS (226 aa). The segment covering 1524–1537 has biased composition (low complexity); it reads SSDQSSSSSQSQSS. Over residues 1538–1553 the composition is skewed to polar residues; sequence YIIRNPQQRRISQSQP. Phosphoserine is present on Ser-1549. Composition is skewed to acidic residues over residues 1559–1574 and 1605–1614; these read EEQD…EVEV and HDEDGSDMEL. Polar residues predominate over residues 1629–1638; that stretch reads NHSNQDNASG. Composition is skewed to low complexity over residues 1641–1657, 1668–1681, and 1726–1740; these read SVVT…ASSV, SNDS…SSQS, and AAST…PAAS. Thr-1736 bears the Phosphothreonine mark. Phosphoserine is present on Ser-1741. At Tyr-1746 the chain carries Phosphotyrosine. A Phosphoserine modification is found at Ser-1780. Positions 1859–1890 are disordered; sequence LASAGDPGHPNHPLHASQNSARRERMTAREEA. Basic and acidic residues predominate over residues 1879 to 1890; that stretch reads ARRERMTAREEA. Position 1969 is a phosphothreonine (Thr-1969). A disordered region spans residues 1984–2021; it reads GIDNEDSEHENDDDTNQSATLNDKDDDSLPAETGQNHP. Over residues 1985-1998 the composition is skewed to acidic residues; the sequence is IDNEDSEHENDDDT. Residues Ser-1990, Ser-2026, and Ser-2028 each carry the phosphoserine modification. Thr-2030 is subject to Phosphothreonine. Ser-2076 carries the phosphoserine modification. Residues 2117–2142 form a disordered region; the sequence is RQKKEGEEQPVLPEETESSKPGPSAH. Phosphothreonine is present on Thr-2213. Ser-2241 and Ser-2289 each carry phosphoserine. Residues 2323 to 2392 form a disordered region; sequence HTSLMQRLRN…PSDDPEPLPA (70 aa). Basic and acidic residues-rich tracts occupy residues 2332-2348 and 2356-2368; these read NRGE…EMRR and SRRD…RRQL. Positions 2377-2454 constitute a PABC domain; it reads PASEGNPSDD…AMELIIAHGR (78 aa). The 338-residue stretch at 2462–2799 folds into the HECT domain; it reads LDLGLVDSSE…AIKTKNFGFV (338 aa). Residues Ser-2469, Ser-2484, and Ser-2486 each carry the phosphoserine modification. Residues 2473–2493 form a disordered region; the sequence is VQQENRKRHGSSRSVVDMDLD. Cys-2768 acts as the Glycyl thioester intermediate in catalysis.

This sequence belongs to the UBR5 family. Homotetramer; composed of a dimer of dimers. Associates with CDK9 and TFIIS/TCEA1 and forms a transcription regulatory complex made of CDK9, RNAP II, UBR5 and TFIIS/TCEA1 that can stimulate target gene transcription (e.g. gamma fibrinogen/FGG) by recruiting their promoters. Associates with the E3 ligase complex containing DYRK2, EDD/UBR5, DDB1 and DCAF1 proteins (EDVP complex). Binds TOPBP1. Interacts with PIH1D1. Interacts with CIB1. As to quaternary structure, (Microbial infection) Interacts with human T-cell leukemia virus 1/HTLV-1 protein HBZ; this interaction modulates HBZ stability. In terms of tissue distribution, widely expressed. Most abundant in testis and expressed at high levels in brain, pituitary and kidney.

The protein resides in the nucleus. The protein localises to the cytoplasm. It carries out the reaction S-ubiquitinyl-[E2 ubiquitin-conjugating enzyme]-L-cysteine + [acceptor protein]-L-lysine = [E2 ubiquitin-conjugating enzyme]-L-cysteine + N(6)-ubiquitinyl-[acceptor protein]-L-lysine.. Its pathway is protein modification; protein ubiquitination. E3 ubiquitin-protein ligase involved in different protein quality control pathways in the cytoplasm and nucleus. Mainly acts as a ubiquitin chain elongator that extends pre-ubiquitinated substrates. Component of the N-end rule pathway: ubiquitinates proteins bearing specific N-terminal residues that are destabilizing according to the N-end rule, leading to their degradation. Recognizes type-1 N-degrons, containing positively charged amino acids (Arg, Lys and His). Together with UBR4, part of a cytoplasm protein quality control pathway that prevents protein aggregation by catalyzing assembly of heterotypic 'Lys-11'-/'Lys-48'-linked branched ubiquitin chains on aggregated proteins, leading to substrate recognition by the segregase p97/VCP and degradation by the proteasome: UBR5 is probably branching multiple 'Lys-48'-linked chains of substrates initially modified with mixed conjugates by UBR4. Together with ITCH, catalyzes 'Lys-48'-/'Lys-63'-branched ubiquitination of TXNIP, leading to its degradation: UBR5 mediates branching of 'Lys-48'-linked chains of substrates initially modified with 'Lys-63'-linked conjugates by ITCH. Catalytic component of a nuclear protein quality control pathway that mediates ubiquitination and degradation of unpaired transcription factors (i.e. transcription factors that are not assembled into functional multiprotein complexes): specifically recognizes and binds degrons that are not accessible when transcription regulators are associated with their coactivators. Ubiquitinates various unpaired transcription regulator (MYC, SUPT4H1, SUPT5H, CDC20 and MCRS1), as well as ligand-bound nuclear receptors (ESR1, NR1H3, NR3C1, PGR, RARA, RXRA AND VDR) that are not associated with their nuclear receptor coactivators (NCOAs). Involved in maturation and/or transcriptional regulation of mRNA by mediating polyubiquitination and activation of CDK9. Also acts as a regulator of DNA damage response by acting as a suppressor of RNF168, an E3 ubiquitin-protein ligase that promotes accumulation of 'Lys-63'-linked histone H2A and H2AX at DNA damage sites, thereby acting as a guard against excessive spreading of ubiquitinated chromatin at damaged chromosomes. Regulates DNA topoisomerase II binding protein (TopBP1) in the DNA damage response. Ubiquitinates acetylated PCK1. Acts as a positive regulator of the canonical Wnt signaling pathway by mediating (1) ubiquitination and stabilization of CTNNB1, and (2) 'Lys-48'-linked ubiquitination and degradation of TLE3. Promotes disassembly of the mitotic checkpoint complex (MCC) from the APC/C complex by catalyzing ubiquitination of BUB1B, BUB3 and CDC20. Plays an essential role in extraembryonic development. Required for the maintenance of skeletal tissue homeostasis by acting as an inhibitor of hedgehog (HH) signaling. The chain is E3 ubiquitin-protein ligase UBR5 (UBR5) from Homo sapiens (Human).